The sequence spans 147 residues: Signal peptidase complex subunit 3 (147 aa).

Over 1-6 (MHSWVQ) the chain is Cytoplasmic. The chain crosses the membrane as a helical; Signal-anchor for type II membrane protein span at residues 7 to 29 (RLLTTATTAALLLLAACCAASAL). The Lumenal portion of the chain corresponds to 30 to 147 (DAFHVPSVQA…EFNLPDSYTS (118 aa)).

It belongs to the SPCS3 family. Component of the signal peptidase complex (SPC) composed of a catalytic subunit SEC11 and three accessory subunits SPCS1, SPCS2 and SPCS3. The complex induces a local thinning of the ER membrane which is used to measure the length of the signal peptide (SP) h-region of protein substrates. This ensures the selectivity of the complex towards h-regions shorter than 18-20 amino acids.

The protein resides in the endoplasmic reticulum membrane. Functionally, essential component of the signal peptidase complex (SPC) which catalyzes the cleavage of N-terminal signal sequences from nascent proteins as they are translocated into the lumen of the endoplasmic reticulum. Essential for the SPC catalytic activity, possibly by stabilizing and positioning the active center of the complex close to the lumenal surface. This is Signal peptidase complex subunit 3 from Oryza sativa subsp. japonica (Rice).